Here is a 376-residue protein sequence, read N- to C-terminus: Transcription factor Sp6 (376 aa).

Positions 1–70 (MLTAVCGSLG…VDFSQGYELP (70 aa)) are disordered. Positions 118-126 (GSWWDLHPG) match the 9aaTAD motif. Residues 167-223 (HPHAHHLLPAAGGQHLLGPPDGAKALEVAAPESQGLDSSLDGAARPKGSRRSVPRSS) are disordered. Residues 173 to 186 (LLPAAGGQHLLGPP) show a composition bias toward low complexity. 3 consecutive C2H2-type zinc fingers follow at residues 254 to 278 (HNCH…LRWH), 284 to 308 (FVCN…LQTH), and 314 to 336 (FPCA…MKTH). Over residues 333 to 343 (MKTHEGAKEEA) the composition is skewed to basic and acidic residues. Residues 333-376 (MKTHEGAKEEAAGAASGEGKAGGAVEPPGGKGKREAEGSVAPSN) form a disordered region.

The protein belongs to the Sp1 C2H2-type zinc-finger protein family. In terms of tissue distribution, ubiquitous.

The protein resides in the nucleus. Functionally, promotes cell proliferation. Plays a role in tooth germ growth. Plays a role in the control of enamel mineralization. Binds the AMBN promoter. The sequence is that of Transcription factor Sp6 (SP6) from Homo sapiens (Human).